We begin with the raw amino-acid sequence, 321 residues long: Digestive cysteine proteinase 3 (321 aa).

The first 16 residues, 1-16, serve as a signal peptide directing secretion; sequence MKVAALFLCGLALATA. A propeptide spans 17-106 (activation peptide); the sequence is SPSWDHFKTQ…AVFTAEAGPM (90 aa). Disulfide bonds link C127/C170, C161/C203, and C261/C310. The active site involves C130. Active-site residues include H268 and N288.

The protein belongs to the peptidase C1 family.

Its activity is regulated as follows. Inhibited by E-64, antipain, leupeptin, heavy metal ions, iodoacetic acid, dithionitrobenzene, p-hydroxymercuri-benzoate; activated by mercaptoethanol and dithiothreitol. This Homarus americanus (American lobster) protein is Digestive cysteine proteinase 3 (LCP3).